The following is a 301-amino-acid chain: Probable cyclic nucleotide phosphodiesterase RER_40650 (301 aa).

Positions 20, 22, 61, 95, 167, 205, and 207 each coordinate Fe cation. AMP contacts are provided by residues H22, D61, and 95–96 (NH). An AMP-binding site is contributed by H207.

This sequence belongs to the cyclic nucleotide phosphodiesterase class-III family. Requires Fe(2+) as cofactor.

The polypeptide is Probable cyclic nucleotide phosphodiesterase RER_40650 (Rhodococcus erythropolis (strain PR4 / NBRC 100887)).